A 470-amino-acid chain; its full sequence is Glutamate--tRNA ligase 2 (470 aa).

Residues 10-20 carry the 'HIGH' region motif; the sequence is PSPTGFLHIGS. The short motif at 239–243 is the 'KMSKS' region element; it reads KLSKR. Lys242 is a binding site for ATP.

The protein belongs to the class-I aminoacyl-tRNA synthetase family. Glutamate--tRNA ligase type 1 subfamily. As to quaternary structure, monomer.

The protein resides in the cytoplasm. It catalyses the reaction tRNA(Glu) + L-glutamate + ATP = L-glutamyl-tRNA(Glu) + AMP + diphosphate. In terms of biological role, catalyzes the attachment of glutamate to tRNA(Glu) in a two-step reaction: glutamate is first activated by ATP to form Glu-AMP and then transferred to the acceptor end of tRNA(Glu). The chain is Glutamate--tRNA ligase 2 from Rickettsia prowazekii (strain Madrid E).